Here is a 377-residue protein sequence, read N- to C-terminus: GTPase Obg (377 aa).

The Obg domain maps to 1–159; sequence MKFVDEATIE…RRLRMELKVL (159 aa). Residues 127-148 are disordered; that stretch reads NIHFKSSTNRAPRQWTPGKEGE. One can recognise an OBG-type G domain in the interval 160 to 336; that stretch reads ADVGLLGLPN…LIWALQDYLD (177 aa). GTP contacts are provided by residues 166–173, 191–195, 213–216, 288–291, and 317–319; these read GLPNAGKS, FTTLH, DIPG, NKLD, and SGL. Serine 173 and threonine 193 together coordinate Mg(2+). A disordered region spans residues 339–377; sequence KRKDQDAQDQADGTYVFEDPRFDASRGGAAPATPPGGDE.

It belongs to the TRAFAC class OBG-HflX-like GTPase superfamily. OBG GTPase family. Monomer. Requires Mg(2+) as cofactor.

It localises to the cytoplasm. In terms of biological role, an essential GTPase which binds GTP, GDP and possibly (p)ppGpp with moderate affinity, with high nucleotide exchange rates and a fairly low GTP hydrolysis rate. Plays a role in control of the cell cycle, stress response, ribosome biogenesis and in those bacteria that undergo differentiation, in morphogenesis control. The sequence is that of GTPase Obg from Bordetella bronchiseptica (strain ATCC BAA-588 / NCTC 13252 / RB50) (Alcaligenes bronchisepticus).